The chain runs to 367 residues: Aminomethyltransferase (367 aa).

This sequence belongs to the GcvT family. As to quaternary structure, the glycine cleavage system is composed of four proteins: P, T, L and H.

It carries out the reaction N(6)-[(R)-S(8)-aminomethyldihydrolipoyl]-L-lysyl-[protein] + (6S)-5,6,7,8-tetrahydrofolate = N(6)-[(R)-dihydrolipoyl]-L-lysyl-[protein] + (6R)-5,10-methylene-5,6,7,8-tetrahydrofolate + NH4(+). In terms of biological role, the glycine cleavage system catalyzes the degradation of glycine. The polypeptide is Aminomethyltransferase (Parasynechococcus marenigrum (strain WH8102)).